We begin with the raw amino-acid sequence, 609 residues long: Autophagy-related protein 22-1 (609 aa).

4 helical membrane-spanning segments follow: residues 35–55 (YGWA…PITL), 117–137 (TASF…ILII), 151–171 (LLLM…LGVV), and 176–196 (MVGA…FVLL). Basic and acidic residues predominate over residues 214-231 (AREPRPALDDSRAQEGHS). Residues 214–240 (AREPRPALDDSRAQEGHSDTTNGIEHG) are disordered. N-linked (GlcNAc...) asparagine glycosylation occurs at Asn-244. Residues 287-307 (IGIGYIGAIILQIVCILVVIA) traverse the membrane as a helical segment. Asn-309 is a glycosylation site (N-linked (GlcNAc...) asparagine). 3 consecutive transmembrane segments (helical) span residues 317-337 (LVLF…ALWL), 381-401 (ILLF…VSGT), and 415-435 (AALG…AFSW). Residue Asn-443 is glycosylated (N-linked (GlcNAc...) asparagine). 4 helical membrane-spanning segments follow: residues 450-470 (IIAC…GFIP), 477-497 (FLGL…GLVM), 522-542 (ALYA…VGII), and 552-572 (AFVF…LVDV).

Belongs to the ATG22 family.

It is found in the vacuole membrane. Its function is as follows. Vacuolar effluxer which mediate the efflux of amino acids resulting from autophagic degradation. The release of autophagic amino acids allows the maintenance of protein synthesis and viability during nitrogen starvation. In Aspergillus fumigatus (strain ATCC MYA-4609 / CBS 101355 / FGSC A1100 / Af293) (Neosartorya fumigata), this protein is Autophagy-related protein 22-1 (atg22-1).